A 241-amino-acid polypeptide reads, in one-letter code: Putative lipoprotein YvcA (241 aa).

Positions 1–18 are cleaved as a signal peptide; sequence MKKIIFICFSLLLALTGG. A lipid anchor (N-palmitoyl cysteine) is attached at C19. C19 carries the S-diacylglycerol cysteine lipid modification. Residues 22–48 are disordered; it reads NDNDKNSTNDNKTEAVKPKDMDPKDLP. Residues 23-46 are compositionally biased toward basic and acidic residues; the sequence is DNDKNSTNDNKTEAVKPKDMDPKD.

The protein localises to the cell membrane. In terms of biological role, required for complex colony architecture. This is Putative lipoprotein YvcA (yvcA) from Bacillus subtilis (strain 168).